The sequence spans 78 residues: Probable [Fe-S]-dependent transcriptional repressor (78 aa).

Positions 56, 61, 64, and 70 each coordinate iron-sulfur cluster.

Belongs to the FeoC family.

May function as a transcriptional regulator that controls feoABC expression. The protein is Probable [Fe-S]-dependent transcriptional repressor of Enterobacter sp. (strain 638).